A 589-amino-acid polypeptide reads, in one-letter code: MNPSTSPNRNLASPKSLQLYTTGSEVAWYPTALDEANEIKSINSKAFSFKNQDQIYGAGSLKSRFSTHEISSEKNDSPDFTLVLPSNRLYIVIPGLMLSIFLAALDQTVITTAIPTIVANLDGGSSYSWIGTAYSLAETSILPFCGIMSEVVGRKIVLYTSIVLFLFGSAMCGAAQNMLWLVLCRAVQGIGGGGIMSLVTIVIADITPLQTRPYYTGCMGVTWGVASVMGPLIGGAISQNTTWRWIFFINLPTGGLSLALLIFFLNLVPKPTVSFCVFLRDFDFVGIVTITTGVVLFLLGLNIGSTTGHWAHANVLCYLIFGILCIAGFVVNELYTTRTRIIAPSAFQTLSLSSVMVTSFLHYYIMSTVTYYIPIYFQSIKGDGPLMSGVHTLSLAVVSSVVSAISGMGIGKLKNYRYPMIGGWIVLLAGTGSMIAIYYDTPIPRTMGFLALTAVGIGNLFQPNLIAIQASVPPALMATSCSAFMLLRNMGASVGISIGAVIYDQQLTTLLKGTEYSTGLSYSQIASIPSVSERNFVFNVYANAIRTIWIVNCPVAGVGMLLSFFTKQEKLSQSVTEYKEKDKGFKDAP.

Transmembrane regions (helical) follow at residues 90 to 110 (YIVI…QTVI), 128 to 148 (SWIG…CGIM), 162 to 182 (IVLF…LWLV), 189 to 209 (GIGG…ITPL), 217 to 237 (GCMG…GGAI), 245 to 265 (WIFF…IFFL), 284 to 304 (FVGI…LNIG), 311 to 331 (AHAN…GFVV), 355 to 375 (VMVT…YIPI), 390 to 410 (VHTL…GMGI), 418 to 438 (YPMI…IAIY), 448 to 468 (GFLA…LIAI), 483 to 503 (AFML…AVIY), and 545 to 565 (IRTI…LSFF).

This sequence belongs to the major facilitator superfamily. TCR/Tet family.

It localises to the membrane. This is an uncharacterized protein from Schizosaccharomyces pombe (strain 972 / ATCC 24843) (Fission yeast).